A 117-amino-acid polypeptide reads, in one-letter code: Protein RALF-like 27 (117 aa).

Residues 1 to 27 form the signal peptide; that stretch reads MTKTFFSFSFFFTSSLLLLLAATSATA. Residues 28–71 constitute a propeptide, removed in mature form; sequence STGNVTSGLRYDGCAPGDTVGECITATVEEEDEEGVEAVVRRIL. An N-linked (GlcNAc...) asparagine glycan is attached at Asn31. Intrachain disulfides connect Cys88/Cys96 and Cys107/Cys113.

The protein belongs to the plant rapid alkalinization factor (RALF) family.

The protein localises to the secreted. In terms of biological role, cell signaling peptide that may regulate plant stress, growth, and development. Mediates a rapid alkalinization of extracellular space by mediating a transient increase in the cytoplasmic Ca(2+) concentration leading to a calcium-dependent signaling events through a cell surface receptor and a concomitant activation of some intracellular mitogen-activated protein kinases. The protein is Protein RALF-like 27 (RALFL27) of Arabidopsis thaliana (Mouse-ear cress).